Here is a 791-residue protein sequence, read N- to C-terminus: Penicillin-binding protein 1A (791 aa).

At 1 to 6 the chain is on the cytoplasmic side; that stretch reads MYKSLF. Residues 7 to 27 form a helical; Signal-anchor for type II membrane protein membrane-spanning segment; that stretch reads FCLKILALLFLIGCGIVAYII. Topologically, residues 28–791 are periplasmic; the sequence is YYYSRDLPDY…TEKDQSQEIY (764 aa). The segment at 49–220 is transglycosylase; that stretch reads TRIYSRDGKL…SELNPEKNYA (172 aa). The Proton donor; for transglycosylase activity role is filled by E87. A transpeptidase region spans residues 398–711; that stretch reads DVIVVEPVKD…SSVVLPIFID (314 aa). The active-site Acyl-ester intermediate; for transpeptidase activity is the S457.

This sequence in the N-terminal section; belongs to the glycosyltransferase 51 family. The protein in the C-terminal section; belongs to the transpeptidase family.

It is found in the cell inner membrane. The catalysed reaction is [GlcNAc-(1-&gt;4)-Mur2Ac(oyl-L-Ala-gamma-D-Glu-L-Lys-D-Ala-D-Ala)](n)-di-trans,octa-cis-undecaprenyl diphosphate + beta-D-GlcNAc-(1-&gt;4)-Mur2Ac(oyl-L-Ala-gamma-D-Glu-L-Lys-D-Ala-D-Ala)-di-trans,octa-cis-undecaprenyl diphosphate = [GlcNAc-(1-&gt;4)-Mur2Ac(oyl-L-Ala-gamma-D-Glu-L-Lys-D-Ala-D-Ala)](n+1)-di-trans,octa-cis-undecaprenyl diphosphate + di-trans,octa-cis-undecaprenyl diphosphate + H(+). The enzyme catalyses Preferential cleavage: (Ac)2-L-Lys-D-Ala-|-D-Ala. Also transpeptidation of peptidyl-alanyl moieties that are N-acyl substituents of D-alanine.. It participates in cell wall biogenesis; peptidoglycan biosynthesis. Cell wall formation. Synthesis of cross-linked peptidoglycan from the lipid intermediates. The enzyme has a penicillin-insensitive transglycosylase N-terminal domain (formation of linear glycan strands) and a penicillin-sensitive transpeptidase C-terminal domain (cross-linking of the peptide subunits). The polypeptide is Penicillin-binding protein 1A (mrcA) (Rickettsia bellii (strain RML369-C)).